The primary structure comprises 102 residues: MNLIDIILFYGFQFNDYWTTVLGLRVGAEEKNPIAGLFISSPYRLALFKFGLITIGMFILIYVVRFKTWTEIVLTVTDVVECLVTLNNTLTIRRYKRRGVRG.

This is an uncharacterized protein from Sulfolobus spindle-shape virus 1 (SSV1).